Reading from the N-terminus, the 792-residue chain is Endonuclease MutS2 (792 aa).

334–341 (GPNTGGKT) contributes to the ATP binding site. One can recognise a Smr domain in the interval 717–792 (IDLRGMMLSE…ENGVTVVELK (76 aa)).

Belongs to the DNA mismatch repair MutS family. MutS2 subfamily. Homodimer. Binds to stalled ribosomes, contacting rRNA.

Functionally, endonuclease that is involved in the suppression of homologous recombination and thus may have a key role in the control of bacterial genetic diversity. Acts as a ribosome collision sensor, splitting the ribosome into its 2 subunits. Detects stalled/collided 70S ribosomes which it binds and splits by an ATP-hydrolysis driven conformational change. Acts upstream of the ribosome quality control system (RQC), a ribosome-associated complex that mediates the extraction of incompletely synthesized nascent chains from stalled ribosomes and their subsequent degradation. Probably generates substrates for RQC. The sequence is that of Endonuclease MutS2 from Ruminiclostridium cellulolyticum (strain ATCC 35319 / DSM 5812 / JCM 6584 / H10) (Clostridium cellulolyticum).